The sequence spans 249 residues: Protein ZPS1 (249 aa).

Residues 1–20 form the signal peptide; sequence MKFSSGKSIIFATIASLALS. 4 N-linked (GlcNAc...) asparagine glycosylation sites follow: Asn28, Asn57, Asn98, and Asn217.

The protein belongs to the ZPS1 family.

The chain is Protein ZPS1 (ZPS1) from Saccharomyces cerevisiae (strain ATCC 204508 / S288c) (Baker's yeast).